We begin with the raw amino-acid sequence, 91 residues long: MKPGIHPDYHPVVFQDANTGKQFLTRSTLTSARTVEWETSEGVREYPLVVVEVTSDSHPFWTGSRRIVDAAGQVEKFRRRYGSRKSGASSD.

Belongs to the bacterial ribosomal protein bL31 family. Type B subfamily. Part of the 50S ribosomal subunit.

The protein is Large ribosomal subunit protein bL31B of Mycolicibacterium vanbaalenii (strain DSM 7251 / JCM 13017 / BCRC 16820 / KCTC 9966 / NRRL B-24157 / PYR-1) (Mycobacterium vanbaalenii).